Consider the following 202-residue polypeptide: Glycerol-3-phosphate acyltransferase (202 aa).

The next 4 helical transmembrane spans lie at 11-31, 87-107, 116-136, and 158-178; these read VLIAALVLGYACGAIPFGLIL, PALAAGLGAFLGHLFPVWLGF, FIGVLLALSPVTLAAFAAIWL, and LILWALGHGAVAALFLVLAAL.

Belongs to the PlsY family. As to quaternary structure, probably interacts with PlsX.

Its subcellular location is the cell inner membrane. The enzyme catalyses an acyl phosphate + sn-glycerol 3-phosphate = a 1-acyl-sn-glycero-3-phosphate + phosphate. The protein operates within lipid metabolism; phospholipid metabolism. Catalyzes the transfer of an acyl group from acyl-phosphate (acyl-PO(4)) to glycerol-3-phosphate (G3P) to form lysophosphatidic acid (LPA). This enzyme utilizes acyl-phosphate as fatty acyl donor, but not acyl-CoA or acyl-ACP. The chain is Glycerol-3-phosphate acyltransferase from Methylorubrum extorquens (strain PA1) (Methylobacterium extorquens).